Reading from the N-terminus, the 1500-residue chain is DNA-directed RNA polymerase subunit beta' (1500 aa).

Residues Cys-60, Cys-62, Cys-75, and Cys-78 each contribute to the Zn(2+) site. Residues 180–199 (DLGGMETAQRSTQRQIEEDY) form a disordered region. Residues Asp-626, Asp-628, and Asp-630 each contribute to the Mg(2+) site. Positions 1002, 1075, 1082, and 1085 each coordinate Zn(2+). Residues 1440–1500 (EVQQAEKSAE…DSDHPDLSSL (61 aa)) form a disordered region. Residues 1449-1468 (EPTTTALPTTNGHQAPQSDT) are compositionally biased toward polar residues.

Belongs to the RNA polymerase beta' chain family. In terms of assembly, the RNAP catalytic core consists of 2 alpha, 1 beta, 1 beta' and 1 omega subunit. When a sigma factor is associated with the core the holoenzyme is formed, which can initiate transcription. Mg(2+) serves as cofactor. Zn(2+) is required as a cofactor.

It carries out the reaction RNA(n) + a ribonucleoside 5'-triphosphate = RNA(n+1) + diphosphate. Functionally, DNA-dependent RNA polymerase catalyzes the transcription of DNA into RNA using the four ribonucleoside triphosphates as substrates. This is DNA-directed RNA polymerase subunit beta' from Chloroflexus aggregans (strain MD-66 / DSM 9485).